Consider the following 432-residue polypeptide: Putative D-alanyl-D-alanine carboxypeptidase (432 aa).

Residues 7 to 25 traverse the membrane as a helical; Signal-anchor segment; the sequence is ATVLLTFSLSAFAVEYPVL.

Belongs to the peptidase S12 family. YfeW subfamily.

Its subcellular location is the cell inner membrane. The enzyme catalyses Preferential cleavage: (Ac)2-L-Lys-D-Ala-|-D-Ala. Also transpeptidation of peptidyl-alanyl moieties that are N-acyl substituents of D-alanine.. This Salmonella choleraesuis (strain SC-B67) protein is Putative D-alanyl-D-alanine carboxypeptidase.